The following is a 124-amino-acid chain: Small ribosomal subunit protein uS12 (124 aa).

Aspartate 89 bears the 3-methylthioaspartic acid mark.

It belongs to the universal ribosomal protein uS12 family. As to quaternary structure, part of the 30S ribosomal subunit. Contacts proteins S8 and S17. May interact with IF1 in the 30S initiation complex.

With S4 and S5 plays an important role in translational accuracy. Its function is as follows. Interacts with and stabilizes bases of the 16S rRNA that are involved in tRNA selection in the A site and with the mRNA backbone. Located at the interface of the 30S and 50S subunits, it traverses the body of the 30S subunit contacting proteins on the other side and probably holding the rRNA structure together. The combined cluster of proteins S8, S12 and S17 appears to hold together the shoulder and platform of the 30S subunit. The chain is Small ribosomal subunit protein uS12 from Prochlorococcus marinus (strain SARG / CCMP1375 / SS120).